The following is a 317-amino-acid chain: Melanocyte-stimulating hormone receptor (317 aa).

Residues methionine 1–glutamate 37 lie on the Extracellular side of the membrane. A glycan (N-linked (GlcNAc...) asparagine) is linked at asparagine 29. Residues methionine 38–isoleucine 63 form a helical membrane-spanning segment. Residues alanine 64–proline 72 lie on the Cytoplasmic side of the membrane. A helical transmembrane segment spans residues methionine 73–leucine 93. Residues glutamate 94 to asparagine 118 lie on the Extracellular side of the membrane. A helical membrane pass occupies residues valine 119 to valine 140. Over aspartate 141–arginine 163 the chain is Cytoplasmic. The chain crosses the membrane as a helical span at residues alanine 164 to tyrosine 183. Over aspartate 184–cysteine 191 the chain is Extracellular. A helical transmembrane segment spans residues leucine 192–leucine 211. Over alanine 212–alanine 240 the chain is Cytoplasmic. A helical membrane pass occupies residues alanine 241–leucine 266. At cysteine 267 to asparagine 279 the chain is on the extracellular side. The helical transmembrane segment at phenylalanine 280–phenylalanine 300 threads the bilayer. Topologically, residues arginine 301–tryptophan 317 are cytoplasmic. Residue cysteine 315 is the site of S-palmitoyl cysteine attachment.

Belongs to the G-protein coupled receptor 1 family. As to quaternary structure, interacts with MGRN1, but does not undergo MGRN1-mediated ubiquitination; this interaction competes with GNAS-binding and thus inhibits agonist-induced cAMP production. Interacts with OPN3; the interaction results in a decrease in MC1R-mediated cAMP signaling and ultimately a decrease in melanin production in melanocytes.

The protein resides in the cell membrane. Functionally, receptor for MSH (alpha, beta and gamma) and ACTH. The activity of this receptor is mediated by G proteins which activate adenylate cyclase. Mediates melanogenesis, the production of eumelanin (black/brown) and phaeomelanin (red/yellow), via regulation of cAMP signaling in melanocytes. The sequence is that of Melanocyte-stimulating hormone receptor (MC1R) from Macaca nemestrina (Pig-tailed macaque).